Reading from the N-terminus, the 103-residue chain is ATP synthase subunit H, mitochondrial (103 aa).

Residues M1–G26 constitute a mitochondrion transit peptide.

It belongs to the ATPase h subunit family. As to quaternary structure, F-type ATPases have 2 components, CF(1) - the catalytic core - and CF(0) - the membrane proton channel.

The protein localises to the mitochondrion. The protein resides in the mitochondrion inner membrane. In terms of biological role, mitochondrial membrane ATP synthase (F(1)F(0) ATP synthase or Complex V) produces ATP from ADP in the presence of a proton gradient across the membrane which is generated by electron transport complexes of the respiratory chain. F-type ATPases consist of two structural domains, F(1) - containing the extramembraneous catalytic core and F(0) - containing the membrane proton channel, linked together by a central stalk and a peripheral stalk. During catalysis, ATP synthesis in the catalytic domain of F(1) is coupled via a rotary mechanism of the central stalk subunits to proton translocation. Part of the complex F(0) domain. Minor subunit located with subunit a in the membrane. The protein is ATP synthase subunit H, mitochondrial (atp14) of Schizosaccharomyces pombe (strain 972 / ATCC 24843) (Fission yeast).